A 128-amino-acid chain; its full sequence is Fluoride-specific ion channel FluC (128 aa).

The next 4 helical transmembrane spans lie at 5–25, 34–54, 67–87, and 99–119; these read LFIS…GLLF, FGTL…LGLF, FLIT…SEVV, and FCVL…GIWI. Gly74 and Thr77 together coordinate Na(+).

Belongs to the fluoride channel Fluc/FEX (TC 1.A.43) family.

Its subcellular location is the cell inner membrane. It carries out the reaction fluoride(in) = fluoride(out). Its activity is regulated as follows. Na(+) is not transported, but it plays an essential structural role and its presence is essential for fluoride channel function. In terms of biological role, fluoride-specific ion channel. Important for reducing fluoride concentration in the cell, thus reducing its toxicity. This chain is Fluoride-specific ion channel FluC, found in Haemophilus influenzae (strain PittGG).